An 85-amino-acid polypeptide reads, in one-letter code: U4-theraphotoxin-Hhn1o (85 aa).

The first 22 residues, 1-22 (MKVTLIAILTCAAVLVLHTTAA), serve as a signal peptide directing secretion. Residues 23-48 (EELEAESQLMEVGMPDTELAAVDEER) constitute a propeptide that is removed on maturation. 3 disulfide bridges follow: cysteine 52-cysteine 66, cysteine 56-cysteine 77, and cysteine 71-cysteine 82.

Belongs to the neurotoxin 12 (Hwtx-2) family. 02 (Hwtx-2) subfamily. As to expression, expressed by the venom gland.

It localises to the secreted. Its function is as follows. Postsynaptic neurotoxin. The sequence is that of U4-theraphotoxin-Hhn1o from Cyriopagopus hainanus (Chinese bird spider).